Reading from the N-terminus, the 153-residue chain is Transcriptional repressor NrdR (153 aa).

The segment at 3–34 (CPFCHNQDTRVIDSRAAEEGTAIRRRRSCPAC) is a zinc-finger region. Positions 46–136 (LMVTKRSGAT…VYRSFESLED (91 aa)) constitute an ATP-cone domain.

Belongs to the NrdR family. Zn(2+) serves as cofactor.

In terms of biological role, negatively regulates transcription of bacterial ribonucleotide reductase nrd genes and operons by binding to NrdR-boxes. The chain is Transcriptional repressor NrdR from Thermobifida fusca (strain YX).